A 204-amino-acid chain; its full sequence is Ricin B-like lectin R40G3 (204 aa).

The region spanning 54-200 is the Ricin B-type lectin domain; that stretch reads TVKVYCRANP…CEGDNQRWKI (147 aa).

Expressed in shoots and lamina.

Its function is as follows. Lectin which binds carbohydrates in vitro. Interacts through its lectin domain with glycan structures containing specific motifs. This chain is Ricin B-like lectin R40G3, found in Oryza sativa subsp. japonica (Rice).